A 310-amino-acid chain; its full sequence is Ribosomal RNA small subunit methyltransferase H (310 aa).

S-adenosyl-L-methionine is bound by residues glycine 32 to histidine 34, aspartate 52, phenylalanine 79, aspartate 100, and glutamine 107.

It belongs to the methyltransferase superfamily. RsmH family.

The protein resides in the cytoplasm. The enzyme catalyses cytidine(1402) in 16S rRNA + S-adenosyl-L-methionine = N(4)-methylcytidine(1402) in 16S rRNA + S-adenosyl-L-homocysteine + H(+). Specifically methylates the N4 position of cytidine in position 1402 (C1402) of 16S rRNA. This Bacillus cytotoxicus (strain DSM 22905 / CIP 110041 / 391-98 / NVH 391-98) protein is Ribosomal RNA small subunit methyltransferase H.